We begin with the raw amino-acid sequence, 367 residues long: B2 bradykinin receptor (367 aa).

Topologically, residues 1 to 36 (MLNITSQVLAPALNGSVSQSSGCPNTEWSGWLNVIQ) are extracellular. 2 N-linked (GlcNAc...) asparagine glycosylation sites follow: N3 and N14. A helical transmembrane segment spans residues 37-60 (APFLWVLFVLATLENLFVLSVFCL). At 61–69 (HKSSCTVAE) the chain is on the cytoplasmic side. The chain crosses the membrane as a helical span at residues 70-94 (VYLGNLAAADLILACGLPFWAVTIA). Residues 95–107 (NHFDWLFGEALCR) are Extracellular-facing. C106 and C187 are joined by a disulfide. The chain crosses the membrane as a helical span at residues 108 to 129 (VVNTMIYMNLYSSICFLMLVSI). The Cytoplasmic portion of the chain corresponds to 130–151 (DRYLALVKTMSIGRMRRVRWAK). Residue Y132 is modified to Phosphotyrosine. A helical membrane pass occupies residues 152–174 (LYSLVIWGCTLLLSSPMLVFRTM). The Extracellular segment spans residues 175–197 (KDYRDEGYNVTACIIDYPSRSWE). N-linked (GlcNAc...) asparagine glycosylation occurs at N183. A helical membrane pass occupies residues 198–224 (VFTNVLLNLVGFLLPLSVITFCTVQIL). The Cytoplasmic portion of the chain corresponds to 225 to 243 (QVLRNNEMQKFKEIQTERR). A helical membrane pass occupies residues 244–268 (ATVLVLAVLLLFVVCWLPFQVSTFL). Residues 269 to 287 (DTLLKLGVLSSCWDEHVID) lie on the Extracellular side of the membrane. A helical membrane pass occupies residues 288–311 (VITQVGSFMGYSNSCLNPLVYVIV). The Cytoplasmic portion of the chain corresponds to 312–367 (GKRFRKKSREVYRAACPKAGCVLEPVQAESSMGTLRTSISVERQIHKLPEWTRSSQ). Residue Y323 is modified to Phosphotyrosine. C327 is lipidated: S-palmitoyl cysteine. S342 carries the post-translational modification Phosphoserine. At T345 the chain carries Phosphothreonine. 2 positions are modified to phosphoserine; by GRK6: S349 and S351.

Belongs to the G-protein coupled receptor 1 family. Bradykinin receptor subfamily. BDKRB2 sub-subfamily. Forms a complex with PECAM1 and GNAQ. Interacts with PECAM1.

It is found in the cell membrane. In terms of biological role, receptor for bradykinin. It is associated with G proteins that activate a phosphatidylinositol-calcium second messenger system. The chain is B2 bradykinin receptor (BDKRB2) from Oryctolagus cuniculus (Rabbit).